Reading from the N-terminus, the 417-residue chain is Autophagy-related protein 18 (417 aa).

WD repeat units lie at residues 1-36 (MSMNFVTFNQDYSYLAVGTSKGFRIFTTDPFGKSYE), 76-114 (ELTFPTTVLAIRLNRKRLVIVLEDQIYIYDIQTMKLVYT), 185-225 (AHKS…KLYQ), and 230-269 (SMPSRIYSMSFNITSTLLCVSSATETIHIFKLGQQQGLSK). Positions 226–230 (FRRGS) match the L/FRRG motif motif. The disordered stretch occupies residues 267–300 (LSKTSSPSRKLESSRGSGDESAVESASSEMSSRK). Residues 285 to 296 (DESAVESASSEM) are compositionally biased toward low complexity. WD repeat units follow at residues 300 to 346 (KHNG…AWIK) and 355 to 395 (GGSG…GGEG).

This sequence belongs to the WD repeat PROPPIN family. As to quaternary structure, component of the PI(3,5)P2 regulatory complex.

It is found in the preautophagosomal structure membrane. The protein localises to the vacuole membrane. It localises to the endosome membrane. The PI(3,5)P2 regulatory complex regulates both the synthesis and turnover of phosphatidylinositol 3,5-bisphosphate (PtdIns(3,5)P2). Necessary for proper vacuole morphology. Plays an important role in osmotically-induced vacuole fragmentation. Required for cytoplasm to vacuole transport (Cvt) vesicle formation, pexophagy and starvation-induced autophagy. Involved in correct ATG9 trafficking to the pre-autophagosomal structure. Might also be involved in premeiotic DNA replication. This chain is Autophagy-related protein 18 (ATG18), found in Coccidioides immitis (strain RS) (Valley fever fungus).